The primary structure comprises 104 residues: Large ribosomal subunit protein uL24 (104 aa).

This sequence belongs to the universal ribosomal protein uL24 family. In terms of assembly, part of the 50S ribosomal subunit.

Its function is as follows. One of two assembly initiator proteins, it binds directly to the 5'-end of the 23S rRNA, where it nucleates assembly of the 50S subunit. In terms of biological role, one of the proteins that surrounds the polypeptide exit tunnel on the outside of the subunit. This chain is Large ribosomal subunit protein uL24, found in Photobacterium profundum (strain SS9).